The sequence spans 529 residues: [Pyruvate dehydrogenase [acetyl-transferring]]-phosphatase 2, mitochondrial (529 aa).

Residues 1–66 (MSSTVSYWIL…FTLCKAYRHT (66 aa)) constitute a mitochondrion transit peptide. The PPM-type phosphatase domain maps to 106 to 517 (VLRFESNQLA…DDITVTVVYF (412 aa)). 4 residues coordinate Mn(2+): D141, G142, D412, and D508.

This sequence belongs to the PP2C family. Requires Mg(2+) as cofactor.

It localises to the mitochondrion. It carries out the reaction O-phospho-L-seryl-[pyruvate dehydrogenase E1 alpha subunit] + H2O = L-seryl-[pyruvate dehydrogenase E1 alpha subunit] + phosphate. Functionally, mitochondrial enzyme that catalyzes the dephosphorylation and concomitant reactivation of the alpha subunit of the E1 component of the pyruvate dehydrogenase complex (PDC), thereby stimulating the conversion of pyruvate into acetyl-CoA. Acts as a crucial regulator of T cell metabolism and function, with a particular focus on T-helper Th17. The sequence is that of [Pyruvate dehydrogenase [acetyl-transferring]]-phosphatase 2, mitochondrial from Homo sapiens (Human).